A 230-amino-acid chain; its full sequence is Maleylacetoacetate isomerase (230 aa).

The GST N-terminal domain occupies 7–95; the sequence is LRVTLYTYFR…YLDEAFPDNP (89 aa). Glutathione is bound by residues 17-22, Gln46, Val60, 79-80, Gln123, and 127-129; these read SSCSAR, QS, and NLR. A GST C-terminal domain is found at 104-226; the sequence is NPQQRALVRS…HWRTQQDTPT (123 aa).

Belongs to the GST superfamily. Zeta family. Requires glutathione as cofactor.

The protein resides in the cytoplasm. It carries out the reaction 4-maleylacetoacetate = 4-fumarylacetoacetate. The protein operates within amino-acid degradation; L-phenylalanine degradation; acetoacetate and fumarate from L-phenylalanine: step 5/6. This is Maleylacetoacetate isomerase (maiA) from Emericella nidulans (strain FGSC A4 / ATCC 38163 / CBS 112.46 / NRRL 194 / M139) (Aspergillus nidulans).